The sequence spans 310 residues: tRNA dimethylallyltransferase (310 aa).

14-21 (GPTASGKT) serves as a coordination point for ATP. 16-21 (TASGKT) is a binding site for substrate. Interaction with substrate tRNA regions lie at residues 39-42 (DSAL), 163-167 (QRLSR), and 244-249 (RCVGYR).

Belongs to the IPP transferase family. Monomer. It depends on Mg(2+) as a cofactor.

The enzyme catalyses adenosine(37) in tRNA + dimethylallyl diphosphate = N(6)-dimethylallyladenosine(37) in tRNA + diphosphate. Functionally, catalyzes the transfer of a dimethylallyl group onto the adenine at position 37 in tRNAs that read codons beginning with uridine, leading to the formation of N6-(dimethylallyl)adenosine (i(6)A). The sequence is that of tRNA dimethylallyltransferase from Tolumonas auensis (strain DSM 9187 / NBRC 110442 / TA 4).